A 479-amino-acid polypeptide reads, in one-letter code: ATP synthase subunit beta (479 aa).

Gly-162–Thr-169 provides a ligand contact to ATP.

It belongs to the ATPase alpha/beta chains family. As to quaternary structure, F-type ATPases have 2 components, CF(1) - the catalytic core - and CF(0) - the membrane proton channel. CF(1) has five subunits: alpha(3), beta(3), gamma(1), delta(1), epsilon(1). CF(0) has three main subunits: a(1), b(2) and c(9-12). The alpha and beta chains form an alternating ring which encloses part of the gamma chain. CF(1) is attached to CF(0) by a central stalk formed by the gamma and epsilon chains, while a peripheral stalk is formed by the delta and b chains.

The protein localises to the cell membrane. It carries out the reaction ATP + H2O + 4 H(+)(in) = ADP + phosphate + 5 H(+)(out). Produces ATP from ADP in the presence of a proton gradient across the membrane. The catalytic sites are hosted primarily by the beta subunits. The chain is ATP synthase subunit beta from Mesoplasma florum (strain ATCC 33453 / NBRC 100688 / NCTC 11704 / L1) (Acholeplasma florum).